The chain runs to 169 residues: U3 small nucleolar ribonucleoprotein protein imp3 (169 aa).

The 58-residue stretch at 109-166 folds into the S4 RNA-binding domain; that stretch reads RRLPVVMCRLKMCETVSTSVKYVEHGHVRVGPEVITDPAFFVTRNMEDFVTWVDSSKI.

Belongs to the universal ribosomal protein uS4 family. Component of a heterotrimeric complex containing imp3, imp4 and mpp10.

It localises to the nucleus. Its subcellular location is the nucleolus. Functionally, component of the U3 small nucleolar ribonucleoprotein. Required for the early cleavages at sites A0, A1 and A2 during 18S ribosomal pre-RNA processing. In Pneumocystis carinii, this protein is U3 small nucleolar ribonucleoprotein protein imp3 (RBP).